A 146-amino-acid polypeptide reads, in one-letter code: NADH-quinone oxidoreductase subunit A (146 aa).

3 helical membrane-spanning segments follow: residues 8–28 (FGSVFVFLLLGVIFVVGGYLT), 63–83 (FYVVALIFIIFDVEVVFLYPW), and 93–113 (FALIEVLVFAGILILGLAYAW).

This sequence belongs to the complex I subunit 3 family. NDH-1 is composed of 14 different subunits. Subunits NuoA, H, J, K, L, M, N constitute the membrane sector of the complex.

It is found in the cell inner membrane. The catalysed reaction is a quinone + NADH + 5 H(+)(in) = a quinol + NAD(+) + 4 H(+)(out). In terms of biological role, NDH-1 shuttles electrons from NADH, via FMN and iron-sulfur (Fe-S) centers, to quinones in the respiratory chain. The immediate electron acceptor for the enzyme in this species is believed to be a menaquinone. Couples the redox reaction to proton translocation (for every two electrons transferred, four hydrogen ions are translocated across the cytoplasmic membrane), and thus conserves the redox energy in a proton gradient. In Chlorobium chlorochromatii (strain CaD3), this protein is NADH-quinone oxidoreductase subunit A.